The chain runs to 200 residues: ATP synthase subunit b (200 aa).

Residues 12–32 (ILSGLAVAVAILVPVLALASG) traverse the membrane as a helical segment.

Belongs to the ATPase B chain family. In terms of assembly, F-type ATPases have 2 components, F(1) - the catalytic core - and F(0) - the membrane proton channel. F(1) has five subunits: alpha(3), beta(3), gamma(1), delta(1), epsilon(1). F(0) has three main subunits: a(1), b(2) and c(10-14). The alpha and beta chains form an alternating ring which encloses part of the gamma chain. F(1) is attached to F(0) by a central stalk formed by the gamma and epsilon chains, while a peripheral stalk is formed by the delta and b chains.

The protein localises to the cell inner membrane. In terms of biological role, f(1)F(0) ATP synthase produces ATP from ADP in the presence of a proton or sodium gradient. F-type ATPases consist of two structural domains, F(1) containing the extramembraneous catalytic core and F(0) containing the membrane proton channel, linked together by a central stalk and a peripheral stalk. During catalysis, ATP synthesis in the catalytic domain of F(1) is coupled via a rotary mechanism of the central stalk subunits to proton translocation. Functionally, component of the F(0) channel, it forms part of the peripheral stalk, linking F(1) to F(0). This chain is ATP synthase subunit b, found in Trichlorobacter lovleyi (strain ATCC BAA-1151 / DSM 17278 / SZ) (Geobacter lovleyi).